The following is a 715-amino-acid chain: Interferon-induced GTP-binding protein Mx2 (715 aa).

The segment covering 1–14 (MSKAHKSWPHRRRN) has biased composition (basic residues). Disordered stretches follow at residues 1-24 (MSKA…SLKK) and 69-88 (NNQP…PENN). A compositionally biased stretch (polar residues) spans 69 to 80 (NNQPLPGNTSQP). The Dynamin-type G domain occupies 115-387 (DLALPAIAVI…LITHIQKSLP (273 aa)). The tract at residues 125 to 132 (GDQSSGKS) is G1 motif. 125–132 (GDQSSGKS) is a GTP binding site. Residues 150–152 (VTR) are G2 motif. The segment at 225–228 (DLPG) is G3 motif. Residues 225–229 (DLPGI) and 294–297 (TKPD) each bind GTP. The segment at 294–297 (TKPD) is G4 motif. The interval 326-329 (KCRG) is G5 motif. Residues 623–714 (FNEIGVHLNA…ALCQFSSKEI (92 aa)) form the GED domain.

This sequence belongs to the TRAFAC class dynamin-like GTPase superfamily. Dynamin/Fzo/YdjA family.

The protein resides in the cytoplasm. It is found in the nucleus. Its function is as follows. Interferon-induced dynamin-like GTPase with antiviral activity. The polypeptide is Interferon-induced GTP-binding protein Mx2 (MX2) (Macaca mulatta (Rhesus macaque)).